Reading from the N-terminus, the 476-residue chain is Thymidine phosphorylase (476 aa).

A compositionally biased stretch (pro residues) spans 1-11 (MAAPGTPPPLA). Positions 1 to 26 (MAAPGTPPPLAPETAGADSGGGSGEH) are disordered. 2 positions are modified to phosphothreonine: T6 and T475.

The protein belongs to the thymidine/pyrimidine-nucleoside phosphorylase family. Homodimer.

The catalysed reaction is thymidine + phosphate = 2-deoxy-alpha-D-ribose 1-phosphate + thymine. It participates in pyrimidine metabolism; dTMP biosynthesis via salvage pathway; dTMP from thymine: step 1/2. Its function is as follows. Catalyzes the reversible phosphorolysis of thymidine. The produced molecules are then utilized as carbon and energy sources or in the rescue of pyrimidine bases for nucleotide synthesis. The sequence is that of Thymidine phosphorylase (Tymp) from Rattus norvegicus (Rat).